Consider the following 345-residue polypeptide: tRNA dimethylallyltransferase (345 aa).

Glycine 9–serine 16 contributes to the ATP binding site. Threonine 11 to serine 16 contacts substrate. Interaction with substrate tRNA regions lie at residues aspartate 34–glutamine 37 and glutamine 195–arginine 199.

This sequence belongs to the IPP transferase family. As to quaternary structure, monomer. Requires Mg(2+) as cofactor.

It catalyses the reaction adenosine(37) in tRNA + dimethylallyl diphosphate = N(6)-dimethylallyladenosine(37) in tRNA + diphosphate. In terms of biological role, catalyzes the transfer of a dimethylallyl group onto the adenine at position 37 in tRNAs that read codons beginning with uridine, leading to the formation of N6-(dimethylallyl)adenosine (i(6)A). This Orientia tsutsugamushi (strain Boryong) (Rickettsia tsutsugamushi) protein is tRNA dimethylallyltransferase.